A 732-amino-acid polypeptide reads, in one-letter code: Small conductance calcium-activated potassium channel protein 3 (732 aa).

Over residues 1–11 (MDTSGHFHDSG) the composition is skewed to basic and acidic residues. 2 disordered regions span residues 1–82 (MDTS…QQAP) and 103–162 (HSSP…ASPL). The segment covering 35 to 59 (QPPPPSAPPAVPQQPPGPLLQPQPP) has biased composition (pro residues). Residues 60 to 82 (QLQQQQQQQQQQQQQQQQQQQAP) are compositionally biased toward low complexity. The segment covering 113-133 (NSANSTAILHPSSRQGSQLNL) has biased composition (polar residues). The span at 139–148 (GHSPSSTATS) shows a compositional bias: low complexity. Position 168 is a phosphoserine (serine 168). Positions 241–257 (THNHQHAGTTAGSTTFP) are enriched in polar residues. The disordered stretch occupies residues 241 to 260 (THNHQHAGTTAGSTTFPKAN). The helical transmembrane segment at 289–309 (LIFGMFGIVVMVIETELSWGL) threads the bilayer. A helical transmembrane segment spans residues 316 to 336 (FSLALKCLISLSTIILLGLII). Residues 367–387 (ISLEMLVCAIHPIPGEYKFFW) traverse the membrane as a helical segment. The helical transmembrane segment at 406–426 (IILSIPMFLRLYLIARVMLLH) threads the bilayer. A helical membrane pass occupies residues 455 to 475 (LMTICPGTVLLVFSISLWIIA). Positions 495-515 (FLGAMWLISITFLSIGYGDMV) form an intramembrane region, pore-forming. The chain crosses the membrane as a helical span at residues 524–544 (VCLLTGIMGAGCTALVVAVVA). The calmodulin-binding stretch occupies residues 562 to 638 (DTQLTKRIKN…LVDLSKMQNV (77 aa)). Positions 643–670 (ITELNDRSEDLEKQIGSLESKLEHLTAS) form a coiled coil. The disordered stretch occupies residues 704–732 (GTSHAPPSDSPIGISSTSFPTPYTSSSSC). Low complexity predominate over residues 718–732 (SSTSFPTPYTSSSSC).

This sequence belongs to the potassium channel KCNN family. KCa2.3/KCNN3 subfamily. As to quaternary structure, homodimer. Heteromultimer with KCNN2 or KCNN1; this modulates plasma membrane expression and consequently the small conductance calcium-activated potassium channel activity. The complex is composed of 4 channel subunits each of which binds to a calmodulin subunit which regulates the channel activity through calcium-binding. Interacts with CALM1.

The protein resides in the cell membrane. It localises to the cytoplasm. Its subcellular location is the myofibril. The protein localises to the sarcomere. It is found in the z line. The enzyme catalyses K(+)(in) = K(+)(out). With respect to regulation, inhibited by bee venom neurotoxin apamin. Small conductance calcium-activated potassium channel that mediates the voltage-independent transmembrane transfer of potassium across the cell membrane through a constitutive interaction with calmodulin which binds the intracellular calcium allowing its opening. The current is characterized by a voltage-independent activation, an intracellular calcium concentration increase-dependent activation and a single-channel conductance of 10 picosiemens. Also presents an inwardly rectifying current, thus reducing its already small outward conductance of potassium ions, which is particularly the case when the membrane potential displays positive values, above + 20 mV. Activation is followed by membrane hyperpolarization. Thought to regulate neuronal excitability by contributing to the slow component of synaptic afterhyperpolarization. In Rattus norvegicus (Rat), this protein is Small conductance calcium-activated potassium channel protein 3.